The following is a 121-amino-acid chain: Small ribosomal subunit protein bS16 (121 aa).

The disordered stretch occupies residues 80–121 (AGVREKTERNNPNKAKPGKKAQERAEEKAAKAAEAAEAADAE). Composition is skewed to basic and acidic residues over residues 81-90 (GVREKTERNN) and 99-110 (KAQERAEEKAAK).

It belongs to the bacterial ribosomal protein bS16 family.

The sequence is that of Small ribosomal subunit protein bS16 from Ruegeria sp. (strain TM1040) (Silicibacter sp.).